The primary structure comprises 153 residues: Troponin C (153 aa).

EF-hand domains follow at residues 9–44, 45–80, 85–120, and 121–153; these read EQVQ…LGQT, FEEN…FLVE, AMQE…LDDK, and LTED…MTGD. Positions 58, 60, 62, 64, and 69 each coordinate Ca(2+). Positions 134, 136, 138, 140, and 145 each coordinate Ca(2+).

The protein belongs to the troponin C family.

Functionally, troponin is the central regulatory protein of striated muscle contraction. Tn consists of three components: Tn-I which is the inhibitor of actomyosin ATPase, Tn-T which contains the binding site for tropomyosin and Tn-C. The binding of calcium to Tn-C abolishes the inhibitory action of Tn on actin filaments. This is Troponin C from Tyrophagus putrescentiae (Mold mite).